A 1221-amino-acid polypeptide reads, in one-letter code: 2-oxoglutarate dehydrogenase E1/E2 component (1221 aa).

The tract at residues 2–40 (SSASTFGQNAWLVDEMFQQFQKDPKSVDKEWRELFEAQG) is 2-oxoglutarate dehydrogenase E1, N-terminal part. The disordered stretch occupies residues 22–107 (QKDPKSVDKE…KLPEPGQTPI (86 aa)). Over residues 23-36 (KDPKSVDKEWRELF) the composition is skewed to basic and acidic residues. Over residues 41–52 (GPNTTPATTEAQ) the composition is skewed to polar residues. Residues 41 to 89 (GPNTTPATTEAQPSAPKESAKPAPKAAPAAKAAPRVETKPADKTAPKAK) are linker. A compositionally biased stretch (low complexity) spans 53-73 (PSAPKESAKPAPKAAPAAKAA). The span at 74–90 (PRVETKPADKTAPKAKE) shows a compositional bias: basic and acidic residues. Residues 90-337 (ESSVPQQPKL…LRTMSRLLTD (248 aa)) form a succinyltransferase E2 region. Histidine 316 serves as the catalytic Proton acceptor; for succinyltransferase activity. The segment at 338 to 1221 (DSFWDEIFDA…KQLIDEAFEA (884 aa)) is 2-oxoglutarate dehydrogenase E1, C-terminal part. Residue arginine 544 coordinates thiamine diphosphate. 2-oxoglutarate-binding residues include histidine 583 and serine 608. Serine 608, leucine 610, aspartate 645, alanine 646, alanine 647, and asparagine 678 together coordinate thiamine diphosphate. Aspartate 645 contacts Mg(2+). The Mg(2+) site is built by asparagine 678 and isoleucine 680. 2-oxoglutarate is bound at residue histidine 1017. Residues threonine 1035, arginine 1051, lysine 1087, serine 1090, and arginine 1144 each coordinate acetyl-CoA.

It in the N-terminal section; belongs to the alpha-ketoglutarate dehydrogenase family. The protein in the C-terminal section; belongs to the 2-oxoacid dehydrogenase family. As to quaternary structure, homodimer. Part of an unusual ODH/PDH supercomplex, consisting of AceE (E1), AceF (E2), and Lpd (E3) together with OdhA (E1+E2). Interacts with the FHA domain of unphosphorylated OdhI via its C-terminal dehydrogenase domain. It depends on Mg(2+) as a cofactor. The cofactor is thiamine diphosphate.

The enzyme catalyses N(6)-[(R)-lipoyl]-L-lysyl-[protein] + 2-oxoglutarate + H(+) = N(6)-[(R)-S(8)-succinyldihydrolipoyl]-L-lysyl-[protein] + CO2. It carries out the reaction N(6)-[(R)-dihydrolipoyl]-L-lysyl-[protein] + succinyl-CoA = N(6)-[(R)-S(8)-succinyldihydrolipoyl]-L-lysyl-[protein] + CoA. It participates in carbohydrate metabolism; tricarboxylic acid cycle; succinyl-CoA from 2-oxoglutarate (dehydrogenase route): step 1/1. Its activity is regulated as follows. Inhibited by unphosphorylated OdhI, but not by phosphorylated OdhI. Catalyzes the E1 and E2 reactions as part of 2-oxoglutarate dehydrogenase (ODH) activity, to convert 2-oxoglutarate to succinyl-CoA and CO(2). OdhA has reductase activity with 2-oxoglutarate but does not react with pyruvate, and also displays transsuccinylase but no transacetylase activity. Since OdhA is not lipoylated, the succinyltransferase activity of its E2 domain is dependent on lipoyl residues of the acetyltransferase AceF. This is 2-oxoglutarate dehydrogenase E1/E2 component from Corynebacterium glutamicum (strain ATCC 13032 / DSM 20300 / JCM 1318 / BCRC 11384 / CCUG 27702 / LMG 3730 / NBRC 12168 / NCIMB 10025 / NRRL B-2784 / 534).